Consider the following 502-residue polypeptide: Arginine decarboxylase (502 aa).

Lysine 42 carries the N6-(pyridoxal phosphate)lysine modification. 226–236 (IDIGGGLGIDY) is a substrate binding site.

The protein belongs to the Orn/Lys/Arg decarboxylase class-II family. SpeA subfamily. Pyridoxal 5'-phosphate serves as cofactor. The cofactor is Mg(2+).

The catalysed reaction is L-arginine + H(+) = agmatine + CO2. It participates in amine and polyamine biosynthesis; agmatine biosynthesis; agmatine from L-arginine: step 1/1. The sequence is that of Arginine decarboxylase from Solanum lycopersicum (Tomato).